We begin with the raw amino-acid sequence, 501 residues long: Acetylcholine receptor subunit beta (501 aa).

A signal peptide spans 1-23 (MTPGALLMLLGALGAPLAPGVRG). Residues 24–244 (SEAEGRLREK…VIFYLIIRRK (221 aa)) lie on the Extracellular side of the membrane. C151 and C165 are joined by a disulfide. N-linked (GlcNAc...) asparagine glycosylation occurs at N164. Helical transmembrane passes span 245–269 (PLFY…VFYL), 277–295 (MGLS…LLLA), and 311–332 (YLMF…VLNL). Residues 333–469 (HHRSPHTHQM…WQFVAMVVDR (137 aa)) lie on the Cytoplasmic side of the membrane. Position 390 is a phosphotyrosine; by Tyr-kinases (Y390). Residues 470 to 488 (LFLWTFIIFTSVGTLVIFL) traverse the membrane as a helical segment.

The protein belongs to the ligand-gated ion channel (TC 1.A.9) family. Acetylcholine receptor (TC 1.A.9.1) subfamily. Beta-1/CHRNB1 sub-subfamily. As to quaternary structure, pentamer of two alpha chains, and one each of the beta, delta, and gamma (in immature muscle) or epsilon (in mature muscle) chains. The muscle heteropentamer composed of alpha-1, beta-1, delta, epsilon subunits interacts with the alpha-conotoxin ImII.

It is found in the postsynaptic cell membrane. The protein resides in the cell membrane. The catalysed reaction is K(+)(in) = K(+)(out). It catalyses the reaction Na(+)(in) = Na(+)(out). Its function is as follows. After binding acetylcholine, the AChR responds by an extensive change in conformation that affects all subunits and leads to opening of an ion-conducting channel across the plasma membrane. The polypeptide is Acetylcholine receptor subunit beta (Homo sapiens (Human)).